A 302-amino-acid polypeptide reads, in one-letter code: uncharacterized protein (302 aa).

Disordered regions lie at residues 81 to 100, 155 to 209, and 269 to 302; these read ETSD…ERAA, TVTG…PVNP, and LRIE…ALLN. Positions 196–209 are enriched in low complexity; sequence PSLPSSLVSSPVNP.

This is an uncharacterized protein from Ictalurid herpesvirus 1 (strain Auburn) (IcHV-1).